The following is an 892-amino-acid chain: DNA mismatch repair protein MutS (892 aa).

607 to 614 serves as a coordination point for ATP; the sequence is GPNMSGKS. The disordered stretch occupies residues 826–854; that stretch reads ETKAETEEESQLSFFGGEQSSKKQDKPVL. The span at 845 to 854 shows a compositional bias: basic and acidic residues; the sequence is SSKKQDKPVL.

Belongs to the DNA mismatch repair MutS family.

Functionally, this protein is involved in the repair of mismatches in DNA. It is possible that it carries out the mismatch recognition step. This protein has a weak ATPase activity. The chain is DNA mismatch repair protein MutS from Bacillus cereus (strain AH187).